We begin with the raw amino-acid sequence, 126 residues long: Aspartate 1-decarboxylase (126 aa).

Residue serine 25 is the Schiff-base intermediate with substrate; via pyruvic acid of the active site. At serine 25 the chain carries Pyruvic acid (Ser). Position 57 (threonine 57) interacts with substrate. Tyrosine 58 serves as the catalytic Proton donor. Substrate is bound at residue 73-75 (GAA).

This sequence belongs to the PanD family. Heterooctamer of four alpha and four beta subunits. Pyruvate serves as cofactor. In terms of processing, is synthesized initially as an inactive proenzyme, which is activated by self-cleavage at a specific serine bond to produce a beta-subunit with a hydroxyl group at its C-terminus and an alpha-subunit with a pyruvoyl group at its N-terminus.

Its subcellular location is the cytoplasm. It catalyses the reaction L-aspartate + H(+) = beta-alanine + CO2. It participates in cofactor biosynthesis; (R)-pantothenate biosynthesis; beta-alanine from L-aspartate: step 1/1. In terms of biological role, catalyzes the pyruvoyl-dependent decarboxylation of aspartate to produce beta-alanine. The polypeptide is Aspartate 1-decarboxylase (Stutzerimonas stutzeri (strain A1501) (Pseudomonas stutzeri)).